The chain runs to 439 residues: Methylenetetrahydrofolate--tRNA-(uracil-5-)-methyltransferase TrmFO (439 aa).

9–14 provides a ligand contact to FAD; that stretch reads GAGLAG.

This sequence belongs to the MnmG family. TrmFO subfamily. The cofactor is FAD.

It localises to the cytoplasm. The catalysed reaction is uridine(54) in tRNA + (6R)-5,10-methylene-5,6,7,8-tetrahydrofolate + NADH + H(+) = 5-methyluridine(54) in tRNA + (6S)-5,6,7,8-tetrahydrofolate + NAD(+). It catalyses the reaction uridine(54) in tRNA + (6R)-5,10-methylene-5,6,7,8-tetrahydrofolate + NADPH + H(+) = 5-methyluridine(54) in tRNA + (6S)-5,6,7,8-tetrahydrofolate + NADP(+). In terms of biological role, catalyzes the folate-dependent formation of 5-methyl-uridine at position 54 (M-5-U54) in all tRNAs. The protein is Methylenetetrahydrofolate--tRNA-(uracil-5-)-methyltransferase TrmFO of Lactobacillus delbrueckii subsp. bulgaricus (strain ATCC BAA-365 / Lb-18).